We begin with the raw amino-acid sequence, 92 residues long: Small ribosomal subunit protein uS19 (92 aa).

Belongs to the universal ribosomal protein uS19 family.

Functionally, protein S19 forms a complex with S13 that binds strongly to the 16S ribosomal RNA. The polypeptide is Small ribosomal subunit protein uS19 (Methylorubrum extorquens (strain CM4 / NCIMB 13688) (Methylobacterium extorquens)).